A 398-amino-acid chain; its full sequence is Trans-2-enoyl-CoA reductase [NADH] (398 aa).

Residues 47 to 52, 74 to 75, 111 to 112, and 139 to 140 contribute to the NAD(+) site; these read GASSGF, FE, DA, and LA. Substrate is bound at residue tyrosine 225. The active-site Proton donor is the tyrosine 235. Residues lysine 244 and 274–276 each bind NAD(+); that span reads IVT.

It belongs to the TER reductase family. In terms of assembly, monomer.

The catalysed reaction is a 2,3-saturated acyl-CoA + NAD(+) = a (2E)-enoyl-CoA + NADH + H(+). The protein operates within lipid metabolism; fatty acid biosynthesis. In terms of biological role, involved in the fatty acid synthesis (FAS II). Catalyzes the reduction of a carbon-carbon double bond in an enoyl moiety that is covalently linked to a coenzyme A (CoA). This Clostridium beijerinckii (strain ATCC 51743 / NCIMB 8052) (Clostridium acetobutylicum) protein is Trans-2-enoyl-CoA reductase [NADH].